We begin with the raw amino-acid sequence, 311 residues long: tRNA dimethylallyltransferase (311 aa).

ATP is bound at residue 9–16 (GPTAVGKT). 11–16 (TAVGKT) lines the substrate pocket. Residues 34-37 (DSMQ) are interaction with substrate tRNA.

It belongs to the IPP transferase family. As to quaternary structure, monomer. It depends on Mg(2+) as a cofactor.

The enzyme catalyses adenosine(37) in tRNA + dimethylallyl diphosphate = N(6)-dimethylallyladenosine(37) in tRNA + diphosphate. Catalyzes the transfer of a dimethylallyl group onto the adenine at position 37 in tRNAs that read codons beginning with uridine, leading to the formation of N6-(dimethylallyl)adenosine (i(6)A). In Clostridium botulinum (strain Loch Maree / Type A3), this protein is tRNA dimethylallyltransferase.